The sequence spans 229 residues: Extracellular endonuclease (229 aa).

An N-terminal signal peptide occupies residues 1–19 (MSARFIAVFCLFFTVTAHA). The segment at 69-95 (RADASNGNTSSRPGRSGISASAGKPVG) is disordered. A compositionally biased stretch (polar residues) spans 71 to 81 (DASNGNTSSRP).

Belongs to the EndA/NucM nuclease family.

The protein resides in the secreted. This chain is Extracellular endonuclease (endX), found in Pseudomonas fluorescens biotype A.